The following is a 270-amino-acid chain: Tryptophan synthase alpha chain (270 aa).

Active-site proton acceptor residues include Glu-50 and Asp-61.

This sequence belongs to the TrpA family. As to quaternary structure, tetramer of two alpha and two beta chains.

It carries out the reaction (1S,2R)-1-C-(indol-3-yl)glycerol 3-phosphate + L-serine = D-glyceraldehyde 3-phosphate + L-tryptophan + H2O. Its pathway is amino-acid biosynthesis; L-tryptophan biosynthesis; L-tryptophan from chorismate: step 5/5. The alpha subunit is responsible for the aldol cleavage of indoleglycerol phosphate to indole and glyceraldehyde 3-phosphate. The protein is Tryptophan synthase alpha chain of Chlorobium luteolum (strain DSM 273 / BCRC 81028 / 2530) (Pelodictyon luteolum).